Reading from the N-terminus, the 168-residue chain is NADH dehydrogenase [ubiquinone] 1 alpha subcomplex assembly factor 2 (168 aa).

Positions 108-118 (KEKLLQEESNK) are enriched in basic and acidic residues. Residues 108-168 (KEKLLQEESN…MPHGDKGHSQ (61 aa)) form a disordered region. At Ser-133 the chain carries Phosphoserine. The segment covering 144 to 155 (ESPTSTGKTFQP) has biased composition (polar residues).

The protein belongs to the complex I NDUFA12 subunit family. Interacts with ARMC9.

The protein resides in the mitochondrion. Its function is as follows. Acts as a molecular chaperone for mitochondrial complex I assembly. Complex I functions in the transfer of electrons from NADH to the respiratory chain. The immediate electron acceptor for the enzyme is believed to be ubiquinone. Is involved in the initial steps of cilia formation, including removal of CP110 from the mother centrioles, docking of membrane vesicles to the mother centrioles, and establishment of the transition zone. In Bos taurus (Bovine), this protein is NADH dehydrogenase [ubiquinone] 1 alpha subcomplex assembly factor 2 (NDUFAF2).